Consider the following 1192-residue polypeptide: Probable phospholipid-transporting ATPase IM (1192 aa).

Residues 1–44 lie on the Cytoplasmic side of the membrane; it reads MFCSEKKLREVERIVKANDREYNEKFQYADNRIHTSKYNILTFL. The helical transmembrane segment at 45-66 threads the bilayer; it reads PINLFEQFQRVANAYFLCLLIL. Residues 67-72 lie on the Exoplasmic loop side of the membrane; it reads QLIPEI. A helical transmembrane segment spans residues 73–92; the sequence is SSLTWFTTIVPLVLVITMTA. The Cytoplasmic portion of the chain corresponds to 93-276; the sequence is VKDATDDYFR…TSIDRLMNTL (184 aa). A helical transmembrane segment spans residues 277–298; it reads VLWIFGFLICLGIILAIGNSIW. Residues 299–327 are Exoplasmic loop-facing; that stretch reads ESQTGDQFRTFLFWNEGEKSSVFSGFLTF. The chain crosses the membrane as a helical span at residues 328-349; sequence WSYIIILNTVVPISLYVSVEVI. Over 350-871 the chain is Cytoplasmic; that stretch reads RLGHSYFINW…GRWSYFRMCK (522 aa). The active-site 4-aspartylphosphate intermediate is the aspartate 392. Residues aspartate 392, lysine 393, threonine 394, glutamate 496, phenylalanine 537, lysine 560, arginine 594, threonine 674, glycine 675, aspartate 676, arginine 789, and lysine 795 each coordinate ATP. Aspartate 392 serves as a coordination point for Mg(2+). Threonine 394 serves as a coordination point for Mg(2+). Aspartate 815 is a Mg(2+) binding site. ATP contacts are provided by asparagine 818 and aspartate 819. A Mg(2+)-binding site is contributed by aspartate 819. A helical transmembrane segment spans residues 872 to 892; the sequence is FLCYFFYKNFAFTLVHFWFGF. Over 893-904 the chain is Exoplasmic loop; the sequence is FCGFSAQTVYDQ. A helical transmembrane segment spans residues 905–924; sequence WFITLFNIVYTSLPVLAMGI. The Cytoplasmic segment spans residues 925–954; sequence FDQDVSDQNSVDCPQLYKPGQLNLLFNKRK. A helical membrane pass occupies residues 955–976; it reads FFICVLHGIYTSLVLFFIPYGA. The Exoplasmic loop segment spans residues 977-990; the sequence is FYNVAGEDGQHIAD. Residues 991–1013 traverse the membrane as a helical segment; that stretch reads YQSFAVTMATSLVIVVSVQIALD. The Cytoplasmic portion of the chain corresponds to 1014-1019; sequence TSYWTF. The helical transmembrane segment at 1020–1040 threads the bilayer; the sequence is INHVFIWGSIAIYFSILFTMH. The Exoplasmic loop portion of the chain corresponds to 1041–1060; sequence SNGIFGIFPNQFPFVGNARH. Residues 1061 to 1085 traverse the membrane as a helical segment; that stretch reads SLTQKCIWLVILLTTVASVMPVVAF. Over 1086 to 1192 the chain is Cytoplasmic; sequence RFLKVDLYPT…SFSQDKTVKL (107 aa). Positions 1104-1125 are enriched in basic residues; that stretch reads QKAQKKARPPSSRRPRTRRSSS. Disordered regions lie at residues 1104 to 1130 and 1143 to 1163; these read QKAQKKARPPSSRRPRTRRSSSRRSGY and TSGKNMRAKNPPPTSGLEKTH.

It belongs to the cation transport ATPase (P-type) (TC 3.A.3) family. Type IV subfamily. Component of a P4-ATPase flippase complex which consists of a catalytic alpha subunit and an accessory beta subunit. Interacts with beta subunits TMEM30A and TMEM30B. Mg(2+) is required as a cofactor. Ubiquitously expressed at moderate levels.

It localises to the cell membrane. Its subcellular location is the golgi apparatus. It catalyses the reaction ATP + H2O + phospholipidSide 1 = ADP + phosphate + phospholipidSide 2.. Its function is as follows. Component of a P4-ATPase flippase complex which catalyzes the hydrolysis of ATP coupled to the transport of aminophospholipids from the outer to the inner leaflet of various membranes and ensures the maintenance of asymmetric distribution of phospholipids. Phospholipid translocation also seems to be implicated in vesicle formation and in uptake of lipid signaling molecules. The sequence is that of Probable phospholipid-transporting ATPase IM (ATP8B4) from Homo sapiens (Human).